The sequence spans 330 residues: MLYTDGEKVLCFHGPLIYAAKILKAEKWTGEENVTGQVGPHYLVHYDGWKKTWDEWVPETRLLKHNDENLARKATLQEAAKAGSLISSAEKSAASTSAASSLKRAKDSELPDRKSASRGTKRSREHVEAEEEFLKRPEVKISLPDELKLQLVDDWENITKNGQLVPLPRNPCVKDILDDYRKHYLASKRSDPSKQRSPQLVDEVLKGLKLYFDRSLGQNLLYRFERAQYVDYRKKNGPKMGDGDVGNARTANGSMGGEMEPSNVYGAEHLLRLFVTLPMIIVHTSMDAESISLLKEHLAEFLSYIVREKHRLFVREYETASPAYHRISST.

Residues Asp5–Leu62 form the Tudor-knot domain. The tract at residues Thr96–Ala129 is disordered. Residues Arg104–Ser115 show a composition bias toward basic and acidic residues. An MRG domain is found at Lys135–Ser329.

It belongs to the MRG family. As to quaternary structure, component of the NuA4 histone acetyltransferase complex.

The protein resides in the nucleus. Involved in deacetylation of histones, chromatin assembly and chromosome segregation. May act as a transcriptional oscillator, directing histone deacetylases to specific chromosomal domains. Component of the NuA4 histone acetyltransferase complex which is involved in transcriptional activation of selected genes principally by acetylation of nucleosomal histone H4 and H2A. The NuA4 complex is also involved in DNA repair. The protein is Chromatin modification-related protein EAF3 (EAF3) of Mycosarcoma maydis (Corn smut fungus).